The sequence spans 270 residues: Putative pyruvate, phosphate dikinase regulatory protein 1 (270 aa).

151-158 (GVSRTSKT) contacts ADP.

The protein belongs to the pyruvate, phosphate/water dikinase regulatory protein family. PDRP subfamily.

It carries out the reaction N(tele)-phospho-L-histidyl/L-threonyl-[pyruvate, phosphate dikinase] + ADP = N(tele)-phospho-L-histidyl/O-phospho-L-threonyl-[pyruvate, phosphate dikinase] + AMP + H(+). The catalysed reaction is N(tele)-phospho-L-histidyl/O-phospho-L-threonyl-[pyruvate, phosphate dikinase] + phosphate + H(+) = N(tele)-phospho-L-histidyl/L-threonyl-[pyruvate, phosphate dikinase] + diphosphate. Bifunctional serine/threonine kinase and phosphorylase involved in the regulation of the pyruvate, phosphate dikinase (PPDK) by catalyzing its phosphorylation/dephosphorylation. This is Putative pyruvate, phosphate dikinase regulatory protein 1 from Enterococcus faecalis (strain ATCC 700802 / V583).